The primary structure comprises 84 residues: Coiled-coil-helix-coiled-coil-helix domain-containing protein 7 (84 aa).

A CHCH domain is found at 12–54; sequence SNPCLEETDASTKCMDENQYQKDLCTSYFIKYKNCRKFWNGIM. 2 consecutive short sequence motifs (cx9C motif) follow at residues 15–25 and 36–46; these read CLEETDASTKC and CTSYFIKYKNC. 2 disulfides stabilise this stretch: cysteine 15/cysteine 46 and cysteine 25/cysteine 36.

It belongs to the CHCHD7 family.

The protein localises to the mitochondrion intermembrane space. The protein is Coiled-coil-helix-coiled-coil-helix domain-containing protein 7 (chchd7) of Xenopus laevis (African clawed frog).